The sequence spans 575 residues: DNA-directed RNA polymerase subunit beta' (575 aa).

Belongs to the RNA polymerase beta' chain family. As to quaternary structure, in plastids the minimal PEP RNA polymerase catalytic core is composed of four subunits: alpha, beta, beta', and beta''. When a (nuclear-encoded) sigma factor is associated with the core the holoenzyme is formed, which can initiate transcription.

It localises to the plastid. The protein resides in the apicoplast. It carries out the reaction RNA(n) + a ribonucleoside 5'-triphosphate = RNA(n+1) + diphosphate. Its function is as follows. DNA-dependent RNA polymerase catalyzes the transcription of DNA into RNA using the four ribonucleoside triphosphates as substrates. The chain is DNA-directed RNA polymerase subunit beta' (rpoC1) from Plasmodium falciparum (isolate 3D7).